Here is a 206-residue protein sequence, read N- to C-terminus: Protein YmaB (206 aa).

The polypeptide is Protein YmaB (ymaB) (Bacillus subtilis (strain 168)).